We begin with the raw amino-acid sequence, 290 residues long: MKTMIGVIGGSGVYEIDGLEDAVWTKVETPWGDPSDEILTGRLDGVPMAFLPRHGRGHVHSPTTVPYRANIDALKRLGVTDLVSVSACGSFREEMAPGDFVIVDQFIDRSFARAKSFFGSGCVAHVSLAHPTCGRLSALCAEAARATGVTVHEGGTYLCMEGPQFSTLAESLLYKSWGCHVIGMTNMPEAKLAREAEICYASVAMVTDYDSWHPHHGEVDITAIIATLGTNADHARGLVAGLPARLGTERDLCPHGCDRALDHALMTAPAKRDPELLAKLDAVAGRVLKG.

Phosphate contacts are provided by residues Ser11, 53–54 (RH), and 86–87 (SA). A substrate-binding site is contributed by Met184. Residue Thr185 participates in phosphate binding. A substrate-binding site is contributed by 208 to 210 (DYD).

This sequence belongs to the PNP/MTAP phosphorylase family. MTAP subfamily. As to quaternary structure, homohexamer. Dimer of a homotrimer.

The catalysed reaction is S-methyl-5'-thioadenosine + phosphate = 5-(methylsulfanyl)-alpha-D-ribose 1-phosphate + adenine. Its pathway is amino-acid biosynthesis; L-methionine biosynthesis via salvage pathway; S-methyl-5-thio-alpha-D-ribose 1-phosphate from S-methyl-5'-thioadenosine (phosphorylase route): step 1/1. Functionally, catalyzes the reversible phosphorylation of S-methyl-5'-thioadenosine (MTA) to adenine and 5-methylthioribose-1-phosphate. Involved in the breakdown of MTA, a major by-product of polyamine biosynthesis. Responsible for the first step in the methionine salvage pathway after MTA has been generated from S-adenosylmethionine. Has broad substrate specificity with 6-aminopurine nucleosides as preferred substrates. This Cereibacter sphaeroides (strain ATCC 17023 / DSM 158 / JCM 6121 / CCUG 31486 / LMG 2827 / NBRC 12203 / NCIMB 8253 / ATH 2.4.1.) (Rhodobacter sphaeroides) protein is S-methyl-5'-thioadenosine phosphorylase.